The sequence spans 424 residues: uncharacterized protein (424 aa).

This is an uncharacterized protein from Orgyia pseudotsugata (Douglas-fir tussock moth).